Consider the following 280-residue polypeptide: Octanoyltransferase LIP2p2, chloroplastic (280 aa).

Residues 1 to 34 constitute a chloroplast transit peptide; sequence MVFSVATSSVTNPKLHHHHHLSDFNRNRVSTSLK. The BPL/LPL catalytic domain occupies 81 to 270; the sequence is QECSDSLIIL…EFSEVFQLQM (190 aa). Residues 123–130, 191–193, and 204–206 contribute to the substrate site; these read RGGEVTYH, AIG, and GLA. Cys222 serves as the catalytic Acyl-thioester intermediate.

It belongs to the LipB family. As to expression, expressed in roots, leaves, cauline leaves, stems, siliques and flowers.

Its subcellular location is the plastid. It is found in the chloroplast. It carries out the reaction octanoyl-[ACP] + L-lysyl-[protein] = N(6)-octanoyl-L-lysyl-[protein] + holo-[ACP] + H(+). The protein operates within protein modification; protein lipoylation via endogenous pathway; protein N(6)-(lipoyl)lysine from octanoyl-[acyl-carrier-protein]: step 1/2. Functionally, catalyzes the transfer of endogenously produced octanoic acid from octanoyl-acyl-carrier-protein onto the lipoyl domains of lipoate-dependent enzymes. Lipoyl-ACP can also act as a substrate although octanoyl-ACP is likely to be the physiological substrate. Together with LIP1P is essential for de novo plastidial protein lipoylation during seed development. Acts redundantly with LIP2P. This is Octanoyltransferase LIP2p2, chloroplastic from Arabidopsis thaliana (Mouse-ear cress).